We begin with the raw amino-acid sequence, 93 residues long: MLKLEMMLVVLLILPLFYFDAGGQVVQRDWRSDGLARYLQRGDRDVRECNINTPGSSWGKCCLTRMCGPMCCARSGCTCVYHWRRGHGCSCPG.

The N-terminal stretch at 1–23 (MLKLEMMLVVLLILPLFYFDAGG) is a signal peptide. The propeptide occupies 24 to 45 (QVVQRDWRSDGLARYLQRGDRD). The residue at position 48 (glutamate 48) is a 4-carboxyglutamate. Proline 54 carries the 4-hydroxyproline modification. Intrachain disulfides connect cysteine 62/cysteine 71, cysteine 67/cysteine 79, cysteine 72/cysteine 89, and cysteine 77/cysteine 91.

The protein belongs to the conotoxin D superfamily. Hetero-, homo- or pseudo-homodimer (identical sequence, different post-translational modifications). Heterodimer of [carboxyGlu-48, hydroxyPro-54]Ms20.1 and [carboxy'Glu-50', hydroxy'Pro-56']Ms20.4 may exist. Expressed by the venom duct.

It is found in the secreted. Alpha-conotoxins act on postsynaptic membranes, they bind to the nicotinic acetylcholine receptors (nAChR) and thus inhibit them. Through its two C-terminal domains, this homodimeric protein would bind to two nAChR allosteric sites, located outside the nAChR C-loop of the principal binding face and at the adjacent binding interface in a clockwise direction. This toxin specifically blocks mammalian neuronal nAChR of the alpha-7/CHRNA7, alpha-3-beta-2/CHRNA3-CHRNB2 and alpha-4-beta-2/CHRNA4-CHRNB2 subtypes. The polypeptide is Alpha-conotoxin-like Ms20.1 (Conus mustelinus (Weasel cone)).